The primary structure comprises 325 residues: Cell division protein ZipA (325 aa).

Topologically, residues 1 to 5 (MQELR) are periplasmic. Residues 6–26 (LVLILVGALAIAALLFHGLWT) form a helical membrane-spanning segment. Over 27-325 (SRKETSSKFG…KQRVKVFCRK (299 aa)) the chain is Cytoplasmic.

This sequence belongs to the ZipA family. Interacts with FtsZ via their C-terminal domains.

The protein localises to the cell inner membrane. Its function is as follows. Essential cell division protein that stabilizes the FtsZ protofilaments by cross-linking them and that serves as a cytoplasmic membrane anchor for the Z ring. Also required for the recruitment to the septal ring of downstream cell division proteins. The chain is Cell division protein ZipA from Aliivibrio fischeri (strain MJ11) (Vibrio fischeri).